A 955-amino-acid chain; its full sequence is 2-oxoglutarate dehydrogenase E1 component (955 aa).

The protein belongs to the alpha-ketoglutarate dehydrogenase family. In terms of assembly, homodimer. Part of the 2-oxoglutarate dehydrogenase (OGDH) complex composed of E1 (2-oxoglutarate dehydrogenase), E2 (dihydrolipoamide succinyltransferase) and E3 (dihydrolipoamide dehydrogenase); the complex contains multiple copies of the three enzymatic components (E1, E2 and E3). Requires thiamine diphosphate as cofactor.

It catalyses the reaction N(6)-[(R)-lipoyl]-L-lysyl-[protein] + 2-oxoglutarate + H(+) = N(6)-[(R)-S(8)-succinyldihydrolipoyl]-L-lysyl-[protein] + CO2. Its function is as follows. E1 component of the 2-oxoglutarate dehydrogenase (OGDH) complex which catalyzes the decarboxylation of 2-oxoglutarate, the first step in the conversion of 2-oxoglutarate to succinyl-CoA and CO(2). This chain is 2-oxoglutarate dehydrogenase E1 component, found in Bacillus cereus (strain B4264).